The primary structure comprises 355 residues: Protein RecA (355 aa).

73-80 (GPESSGKT) serves as a coordination point for ATP.

It belongs to the RecA family.

The protein resides in the cytoplasm. Can catalyze the hydrolysis of ATP in the presence of single-stranded DNA, the ATP-dependent uptake of single-stranded DNA by duplex DNA, and the ATP-dependent hybridization of homologous single-stranded DNAs. It interacts with LexA causing its activation and leading to its autocatalytic cleavage. The polypeptide is Protein RecA (Solidesulfovibrio magneticus (strain ATCC 700980 / DSM 13731 / RS-1) (Desulfovibrio magneticus)).